Reading from the N-terminus, the 308-residue chain is Nodulation protein D 1 (308 aa).

An HTH lysR-type domain is found at 6 to 63 (LDLNLLVALDALMTERNLTAAARSINLSQPAMSAAVGRLRVYFEDELFTMNGRELVLT). The segment at residues 23-42 (LTAAARSINLSQPAMSAAVG) is a DNA-binding region (H-T-H motif).

The protein belongs to the LysR transcriptional regulatory family.

In terms of biological role, nodD regulates the expression of the nodABCFE genes which encode other nodulation proteins. NodD is also a negative regulator of its own expression. Binds flavonoids as inducers. This chain is Nodulation protein D 1 (nodD1), found in Rhizobium tropici.